Reading from the N-terminus, the 194-residue chain is Probable GTP-binding protein EngB (194 aa).

An EngB-type G domain is found at 22–194 (KIPQIAIVGK…LRIFEEVIEK (173 aa)). Residues 30 to 37 (GKSNVGKS), 57 to 61 (GKTRG), 75 to 78 (DLPG), 142 to 145 (TKAD), and 173 to 175 (FSA) contribute to the GTP site. Residues S37 and T59 each contribute to the Mg(2+) site.

The protein belongs to the TRAFAC class TrmE-Era-EngA-EngB-Septin-like GTPase superfamily. EngB GTPase family. Requires Mg(2+) as cofactor.

Functionally, necessary for normal cell division and for the maintenance of normal septation. This Caldanaerobacter subterraneus subsp. tengcongensis (strain DSM 15242 / JCM 11007 / NBRC 100824 / MB4) (Thermoanaerobacter tengcongensis) protein is Probable GTP-binding protein EngB.